A 110-amino-acid polypeptide reads, in one-letter code: Large ribosomal subunit protein uL22 (110 aa).

It belongs to the universal ribosomal protein uL22 family. Part of the 50S ribosomal subunit.

In terms of biological role, this protein binds specifically to 23S rRNA; its binding is stimulated by other ribosomal proteins, e.g. L4, L17, and L20. It is important during the early stages of 50S assembly. It makes multiple contacts with different domains of the 23S rRNA in the assembled 50S subunit and ribosome. Its function is as follows. The globular domain of the protein is located near the polypeptide exit tunnel on the outside of the subunit, while an extended beta-hairpin is found that lines the wall of the exit tunnel in the center of the 70S ribosome. In Aliarcobacter butzleri (strain RM4018) (Arcobacter butzleri), this protein is Large ribosomal subunit protein uL22.